A 215-amino-acid chain; its full sequence is Deoxyribose-phosphate aldolase (215 aa).

The active-site Proton donor/acceptor is the aspartate 89. Catalysis depends on lysine 153, which acts as the Schiff-base intermediate with acetaldehyde. Residue lysine 182 is the Proton donor/acceptor of the active site.

This sequence belongs to the DeoC/FbaB aldolase family. DeoC type 1 subfamily.

Its subcellular location is the cytoplasm. It carries out the reaction 2-deoxy-D-ribose 5-phosphate = D-glyceraldehyde 3-phosphate + acetaldehyde. The protein operates within carbohydrate degradation; 2-deoxy-D-ribose 1-phosphate degradation; D-glyceraldehyde 3-phosphate and acetaldehyde from 2-deoxy-alpha-D-ribose 1-phosphate: step 2/2. Catalyzes a reversible aldol reaction between acetaldehyde and D-glyceraldehyde 3-phosphate to generate 2-deoxy-D-ribose 5-phosphate. The chain is Deoxyribose-phosphate aldolase from Lactiplantibacillus plantarum (strain ATCC BAA-793 / NCIMB 8826 / WCFS1) (Lactobacillus plantarum).